Reading from the N-terminus, the 427-residue chain is Imidazolonepropionase (427 aa).

2 residues coordinate Fe(3+): His-96 and His-98. Residues His-96 and His-98 each contribute to the Zn(2+) site. Residues Arg-105, Tyr-168, and His-201 each contribute to the 4-imidazolone-5-propanoate site. Tyr-168 contributes to the N-formimidoyl-L-glutamate binding site. His-265 contacts Fe(3+). His-265 is a Zn(2+) binding site. Position 268 (Gln-268) interacts with 4-imidazolone-5-propanoate. Residue Asp-340 coordinates Fe(3+). Zn(2+) is bound at residue Asp-340. Residues Asn-342 and Gly-344 each coordinate N-formimidoyl-L-glutamate. Thr-345 lines the 4-imidazolone-5-propanoate pocket.

The protein belongs to the metallo-dependent hydrolases superfamily. HutI family. The cofactor is Zn(2+). Fe(3+) serves as cofactor.

The protein resides in the cytoplasm. It catalyses the reaction 4-imidazolone-5-propanoate + H2O = N-formimidoyl-L-glutamate. It participates in amino-acid degradation; L-histidine degradation into L-glutamate; N-formimidoyl-L-glutamate from L-histidine: step 3/3. In terms of biological role, catalyzes the hydrolytic cleavage of the carbon-nitrogen bond in imidazolone-5-propanoate to yield N-formimidoyl-L-glutamate. It is the third step in the universal histidine degradation pathway. The polypeptide is Imidazolonepropionase (Psychrobacter cryohalolentis (strain ATCC BAA-1226 / DSM 17306 / VKM B-2378 / K5)).